The following is a 199-amino-acid chain: Probable GTP-binding protein EngB (199 aa).

One can recognise an EngB-type G domain in the interval 28 to 199 (DLPEIALAGR…DSWDAILEQV (172 aa)). Residues 36–43 (GRSNVGKS), 63–67 (GKTQL), 81–84 (DVPG), 148–151 (TKAD), and 180–182 (FSS) each bind GTP. Positions 43 and 65 each coordinate Mg(2+).

The protein belongs to the TRAFAC class TrmE-Era-EngA-EngB-Septin-like GTPase superfamily. EngB GTPase family. Mg(2+) is required as a cofactor.

Functionally, necessary for normal cell division and for the maintenance of normal septation. The polypeptide is Probable GTP-binding protein EngB (Streptococcus pyogenes serotype M3 (strain SSI-1)).